A 262-amino-acid chain; its full sequence is Thioredoxin-like protein HCF164, chloroplastic (262 aa).

The N-terminal 54 residues, 1–54 (MAVVASRCTGLLLPDLGASLAGFRRRRSTPASSLSFRPRRARRRLGSLSCIAPP), are a transit peptide targeting the chloroplast. The tract at residues 47–90 (SLSCIAPPDSAEPQTDEPAAKDDSTEDKAEASSASQDAGNPTFP) is disordered. Residues 64–76 (PAAKDDSTEDKAE) are compositionally biased toward basic and acidic residues. The span at 78 to 89 (SSASQDAGNPTF) shows a compositional bias: polar residues. The region spanning 78 to 230 (SSASQDAGNP…FLDNVVALAS (153 aa)) is the Thioredoxin domain. Active-site nucleophile residues include Cys151 and Cys154. Cys151 and Cys154 are oxidised to a cystine.

It belongs to the thioredoxin family.

Its subcellular location is the plastid. The protein resides in the chloroplast. Functionally, probable thiol-disulfide oxidoreductase that may participate in various redox reactions in the chloroplast. The protein is Thioredoxin-like protein HCF164, chloroplastic of Oryza sativa subsp. japonica (Rice).